We begin with the raw amino-acid sequence, 150 residues long: UPF0336 protein SCO4636 (150 aa).

The MaoC-like domain maps to Val8–Ala116.

Belongs to the UPF0336 family.

This chain is UPF0336 protein SCO4636, found in Streptomyces coelicolor (strain ATCC BAA-471 / A3(2) / M145).